A 257-amino-acid polypeptide reads, in one-letter code: 5-oxoprolinase subunit A (257 aa).

The protein belongs to the LamB/PxpA family. In terms of assembly, forms a complex composed of PxpA, PxpB and PxpC.

It carries out the reaction 5-oxo-L-proline + ATP + 2 H2O = L-glutamate + ADP + phosphate + H(+). Its function is as follows. Catalyzes the cleavage of 5-oxoproline to form L-glutamate coupled to the hydrolysis of ATP to ADP and inorganic phosphate. The polypeptide is 5-oxoprolinase subunit A (Oceanobacillus iheyensis (strain DSM 14371 / CIP 107618 / JCM 11309 / KCTC 3954 / HTE831)).